The primary structure comprises 311 residues: Aspartate carbamoyltransferase catalytic subunit (311 aa).

2 residues coordinate carbamoyl phosphate: Arg59 and Thr60. Lys87 serves as a coordination point for L-aspartate. Arg109, His139, and Gln142 together coordinate carbamoyl phosphate. 2 residues coordinate L-aspartate: Arg172 and Arg224. Carbamoyl phosphate-binding residues include Ala265 and Pro266.

Belongs to the aspartate/ornithine carbamoyltransferase superfamily. ATCase family. As to quaternary structure, heterododecamer (2C3:3R2) of six catalytic PyrB chains organized as two trimers (C3), and six regulatory PyrI chains organized as three dimers (R2).

It carries out the reaction carbamoyl phosphate + L-aspartate = N-carbamoyl-L-aspartate + phosphate + H(+). Its pathway is pyrimidine metabolism; UMP biosynthesis via de novo pathway; (S)-dihydroorotate from bicarbonate: step 2/3. Functionally, catalyzes the condensation of carbamoyl phosphate and aspartate to form carbamoyl aspartate and inorganic phosphate, the committed step in the de novo pyrimidine nucleotide biosynthesis pathway. This is Aspartate carbamoyltransferase catalytic subunit from Streptococcus equi subsp. equi (strain 4047).